The following is a 144-amino-acid chain: 3-hydroxyacyl-[acyl-carrier-protein] dehydratase FabZ (144 aa).

Histidine 48 is a catalytic residue.

This sequence belongs to the thioester dehydratase family. FabZ subfamily.

The protein resides in the cytoplasm. It carries out the reaction a (3R)-hydroxyacyl-[ACP] = a (2E)-enoyl-[ACP] + H2O. In terms of biological role, involved in unsaturated fatty acids biosynthesis. Catalyzes the dehydration of short chain beta-hydroxyacyl-ACPs and long chain saturated and unsaturated beta-hydroxyacyl-ACPs. The chain is 3-hydroxyacyl-[acyl-carrier-protein] dehydratase FabZ from Bacillus thuringiensis (strain Al Hakam).